Here is a 242-residue protein sequence, read N- to C-terminus: Venom nerve growth factor 3 (242 aa).

Positions 1–18 (MSMLCYTLIIAFLIGIWA) are cleaved as a signal peptide. Residues 19–125 (APQSEDNVPL…ALNRNIQAKR (107 aa)) constitute a propeptide that is removed on maturation. The disordered stretch occupies residues 45-69 (HEGLKTSRNTDQRHPAPKKVDDQEP). Positions 46 to 66 (EGLKTSRNTDQRHPAPKKVDD) are enriched in basic and acidic residues. 3 cysteine pairs are disulfide-bonded: Cys139-Cys203, Cys181-Cys231, and Cys191-Cys233.

The protein belongs to the NGF-beta family. In terms of assembly, homodimer; non-covalently linked. As to expression, expressed by the venom gland.

It localises to the secreted. In terms of biological role, nerve growth factor is important for the development and maintenance of the sympathetic and sensory nervous systems. It stimulates division and differentiation of sympathetic and embryonic sensory neurons as well as basal forebrain cholinergic neurons in the brain. Its relevance in the snake venom is not clear. However, it has been shown to inhibit metalloproteinase-dependent proteolysis of platelet glycoprotein Ib alpha, suggesting a metalloproteinase inhibition to prevent metalloprotease autodigestion and/or protection against prey proteases. Binds a lipid between the two protein chains in the homodimer. The lipid-bound form promotes histamine relase from mouse mast cells, contrary to the lipid-free form. The sequence is that of Venom nerve growth factor 3 from Pseudechis australis (Mulga snake).